The primary structure comprises 164 residues: UPF0225 protein Shewmr4_2054 (164 aa).

It belongs to the UPF0225 family.

This is UPF0225 protein Shewmr4_2054 from Shewanella sp. (strain MR-4).